Reading from the N-terminus, the 553-residue chain is CTP synthase (553 aa).

The interval 1–270 (MTKFVFVTGG…DRIICEELRI (270 aa)) is amidoligase domain. S13 contacts CTP. S13 contributes to the UTP binding site. Residues 14–19 (SLGKGI) and D71 each bind ATP. Mg(2+) is bound by residues D71 and E144. CTP-binding positions include 151 to 153 (DIE), 191 to 196 (KTKPTQ), and K227. UTP is bound by residues 191–196 (KTKPTQ) and K227. Positions 295 to 547 (TIGMVGKYVD…VEAALAHQQN (253 aa)) constitute a Glutamine amidotransferase type-1 domain. Residue G356 participates in L-glutamine binding. Residue C383 is the Nucleophile; for glutamine hydrolysis of the active site. Residues 384-387 (LGMQ), E407, and R473 each bind L-glutamine. Residues H520 and E522 contribute to the active site.

This sequence belongs to the CTP synthase family. As to quaternary structure, homotetramer.

It catalyses the reaction UTP + L-glutamine + ATP + H2O = CTP + L-glutamate + ADP + phosphate + 2 H(+). The enzyme catalyses L-glutamine + H2O = L-glutamate + NH4(+). The catalysed reaction is UTP + NH4(+) + ATP = CTP + ADP + phosphate + 2 H(+). It functions in the pathway pyrimidine metabolism; CTP biosynthesis via de novo pathway; CTP from UDP: step 2/2. Its activity is regulated as follows. Allosterically activated by GTP, when glutamine is the substrate; GTP has no effect on the reaction when ammonia is the substrate. The allosteric effector GTP functions by stabilizing the protein conformation that binds the tetrahedral intermediate(s) formed during glutamine hydrolysis. Inhibited by the product CTP, via allosteric rather than competitive inhibition. Its function is as follows. Catalyzes the ATP-dependent amination of UTP to CTP with either L-glutamine or ammonia as the source of nitrogen. Regulates intracellular CTP levels through interactions with the four ribonucleotide triphosphates. The protein is CTP synthase of Ralstonia pickettii (strain 12J).